The sequence spans 246 residues: UL16-binding protein 2 (246 aa).

Positions 1–25 (MAAAAATKILLCLPLLLLLSGWSRA) are cleaved as a signal peptide. An MHC class I alpha-1 like region spans residues 29-117 (DPHSLCYDIT…IQLENYTPKE (89 aa)). Residues Cys-50 and Cys-66 are joined by a disulfide bond. N-linked (GlcNAc...) asparagine glycans are attached at residues Asn-68 and Asn-82. Residues 118 to 210 (PLTLQARMSC…MDSTLEPSAG (93 aa)) form an MHC class I alpha-2 like region. Cys-127 and Cys-190 are joined by a disulfide. An a protein-binding site is contributed by Ser-216. The GPI-anchor amidated serine moiety is linked to residue Ser-217. The propeptide at 218 to 246 (GTTQLRATATTLILCCLLIILPCFILPGI) is removed in mature form.

Belongs to the MHC class I family. As to quaternary structure, interacts with KLRK1/NKG2D. Does not bind to beta2-microglobulin. (Microbial infection) In CMV-infected cells, interacts with the viral glycoprotein UL16; this interaction causes ULBP2 retention in the endoplasmic reticulum and cis-Golgi and prevents binding to and activation of KLRK1/NKG2D, providing CMV with an immune evasion mechanism. In terms of tissue distribution, expressed in various types of cancer cell lines and in the fetus, but not in normal tissues.

It localises to the cell membrane. The protein localises to the endoplasmic reticulum. Its subcellular location is the secreted. Functionally, binds and activates the KLRK1/NKG2D receptor, mediating natural killer cell cytotoxicity. This is UL16-binding protein 2 from Homo sapiens (Human).